A 338-amino-acid polypeptide reads, in one-letter code: Ribosomal RNA large subunit methyltransferase F (338 aa).

Residues 1–21 are disordered; the sequence is MTQKKNKPTQKKKGLHPRNPH.

It belongs to the methyltransferase superfamily. METTL16/RlmF family.

It is found in the cytoplasm. It carries out the reaction adenosine(1618) in 23S rRNA + S-adenosyl-L-methionine = N(6)-methyladenosine(1618) in 23S rRNA + S-adenosyl-L-homocysteine + H(+). Functionally, specifically methylates the adenine in position 1618 of 23S rRNA. This is Ribosomal RNA large subunit methyltransferase F from Photobacterium profundum (strain SS9).